The primary structure comprises 215 residues: Imidazole glycerol phosphate synthase subunit HisH (215 aa).

The region spanning 3–215 (TAVVFDYGFG…QLLKNWIATL (213 aa)) is the Glutamine amidotransferase type-1 domain. The Nucleophile role is filled by C81. Residues H196 and E198 contribute to the active site.

Heterodimer of HisH and HisF.

It is found in the cytoplasm. The enzyme catalyses 5-[(5-phospho-1-deoxy-D-ribulos-1-ylimino)methylamino]-1-(5-phospho-beta-D-ribosyl)imidazole-4-carboxamide + L-glutamine = D-erythro-1-(imidazol-4-yl)glycerol 3-phosphate + 5-amino-1-(5-phospho-beta-D-ribosyl)imidazole-4-carboxamide + L-glutamate + H(+). It catalyses the reaction L-glutamine + H2O = L-glutamate + NH4(+). The protein operates within amino-acid biosynthesis; L-histidine biosynthesis; L-histidine from 5-phospho-alpha-D-ribose 1-diphosphate: step 5/9. IGPS catalyzes the conversion of PRFAR and glutamine to IGP, AICAR and glutamate. The HisH subunit catalyzes the hydrolysis of glutamine to glutamate and ammonia as part of the synthesis of IGP and AICAR. The resulting ammonia molecule is channeled to the active site of HisF. This is Imidazole glycerol phosphate synthase subunit HisH from Bifidobacterium longum (strain NCC 2705).